Reading from the N-terminus, the 62-residue chain is Photosystem II reaction center protein Z (62 aa).

2 helical membrane passes run 8 to 28 (AVFA…VVFA) and 41 to 61 (FSGT…NSLI).

The protein belongs to the PsbZ family. As to quaternary structure, PSII is composed of 1 copy each of membrane proteins PsbA, PsbB, PsbC, PsbD, PsbE, PsbF, PsbH, PsbI, PsbJ, PsbK, PsbL, PsbM, PsbT, PsbY, PsbZ, Psb30/Ycf12, at least 3 peripheral proteins of the oxygen-evolving complex and a large number of cofactors. It forms dimeric complexes.

It localises to the plastid. It is found in the chloroplast thylakoid membrane. Functionally, may control the interaction of photosystem II (PSII) cores with the light-harvesting antenna, regulates electron flow through the 2 photosystem reaction centers. PSII is a light-driven water plastoquinone oxidoreductase, using light energy to abstract electrons from H(2)O, generating a proton gradient subsequently used for ATP formation. The chain is Photosystem II reaction center protein Z from Liriodendron tulipifera (Tuliptree).